A 383-amino-acid chain; its full sequence is GA-binding protein subunit beta-1 (383 aa).

Ser2 carries the N-acetylserine modification. ANK repeat units lie at residues 5–34 and 37–66; these read DLGK…PFTT and LGTS…SRDA. Residue Lys69 is modified to N6-acetyllysine. 3 ANK repeats span residues 70 to 99, 103 to 132, and 136 to 166; these read VDRT…DVNA, LKMT…DVHT, and FCKT…QINT. N6-acetyllysine is present on residues Lys340 and Lys369.

In terms of assembly, heterotetramer of two alpha and two beta subunits. Interacts with HCFC1, causing repression of transcriptional activity. Acetylated by EP300/p300. Deacetylated by SIRT7, promoting heterotetramerization and activity.

It is found in the nucleus. Functionally, transcription factor capable of interacting with purine rich repeats (GA repeats). Acts as a master regulator of nuclear-encoded mitochondrial genes. This is GA-binding protein subunit beta-1 (GABPB1) from Bos taurus (Bovine).